The following is a 443-amino-acid chain: Leucine-rich repeat-containing protein 17 (443 aa).

The first 15 residues, 1 to 15 (MRIVAILLLFCLCRA), serve as a signal peptide directing secretion. Residues 20–48 (KSSPGVLRSQGNPSRSHGRGGRRGSSPVK) are disordered. LRR repeat units lie at residues 84–105 (DLLH…MFAK), 108–129 (RLKS…AFFG), and 132–153 (KLTT…AFIY). An LRRCT 1 domain is found at 165–216 (NPWHCTCELETLISMLQIPRNRNLGNYAKCGSPPALRNKKLLQLKPQELCDE). The LRRNT domain maps to 229–270 (SGIPAVIRPEADSTLCHNYVFPIQTLDCKRKELKKVPSNIPP). 3 LRR repeats span residues 271–292 (DIVK…EFED), 295–316 (ELKK…AFLG), and 319–342 (HLEE…EDLY). One can recognise an LRRCT 2 domain in the interval 352–404 (NPWRCDYSIHYLYYWLKHHYNVHYNGLECKTPEEYKGWSVGKYVRSYYEECPK).

As to expression, expressed in osteoblasts, spleen, lung and heart.

The protein localises to the secreted. It is found in the extracellular space. Involved in bone homeostasis. Acts as a negative regulator of RANKL-induced osteoclast precursor differentiation from bone marrow precursors. In Mus musculus (Mouse), this protein is Leucine-rich repeat-containing protein 17 (Lrrc17).